We begin with the raw amino-acid sequence, 284 residues long: Nucleotide-binding protein Shewmr7_3352 (284 aa).

8–15 serves as a coordination point for ATP; it reads GRSGSGKS. 56-59 contacts GTP; that stretch reads DVRN.

The protein belongs to the RapZ-like family.

Functionally, displays ATPase and GTPase activities. In Shewanella sp. (strain MR-7), this protein is Nucleotide-binding protein Shewmr7_3352.